Consider the following 328-residue polypeptide: Malate dehydrogenase 1 (328 aa).

12-18 (GAAGQIA) lines the NAD(+) pocket. Residues Arg-93 and Arg-99 each coordinate substrate. Residues Asn-106, Gln-113, and 130–132 (VGN) each bind NAD(+). Residues Asn-132 and Arg-163 each contribute to the substrate site. Catalysis depends on His-188, which acts as the Proton acceptor.

The protein belongs to the LDH/MDH superfamily. MDH type 2 family.

The enzyme catalyses (S)-malate + NAD(+) = oxaloacetate + NADH + H(+). Functionally, catalyzes the reversible oxidation of malate to oxaloacetate. The sequence is that of Malate dehydrogenase 1 from Burkholderia vietnamiensis (strain G4 / LMG 22486) (Burkholderia cepacia (strain R1808)).